Here is a 376-residue protein sequence, read N- to C-terminus: Alanine racemase (376 aa).

Lys40 acts as the Proton acceptor; specific for D-alanine in catalysis. Lys40 carries the N6-(pyridoxal phosphate)lysine modification. Arg138 contributes to the substrate binding site. Tyr270 (proton acceptor; specific for L-alanine) is an active-site residue. Residue Met317 participates in substrate binding.

Belongs to the alanine racemase family. The cofactor is pyridoxal 5'-phosphate.

It carries out the reaction L-alanine = D-alanine. Its pathway is amino-acid biosynthesis; D-alanine biosynthesis; D-alanine from L-alanine: step 1/1. Functionally, catalyzes the interconversion of L-alanine and D-alanine. May also act on other amino acids. The chain is Alanine racemase (alr) from Lactobacillus delbrueckii subsp. bulgaricus (strain ATCC 11842 / DSM 20081 / BCRC 10696 / JCM 1002 / NBRC 13953 / NCIMB 11778 / NCTC 12712 / WDCM 00102 / Lb 14).